Reading from the N-terminus, the 2035-residue chain is MFKGLSKGSQGKGSPKGSPAKGSPKGSPNKHNRAATQELALLISRMQANADQVERDILETQKKLQQDRQNGEQNQALQHQQETGRNLKEAEVLLKDLFLDVDKARRLKHPQAEEIEKDIKQLHERVTQECSEYRALYEKMVLPPDVGPRVDWARVLEQKQNLVREGHYGPGMAELEQQVAEHNILQREIEAYGQQLRTLVGPDANTIRNQYRELLKAASWRRQSLGSLYTHLQGCTKQLSALADQQGRILQQDWSDLMPDPAGVRREYEHFKQHELLAQERSINQLEDDADRMVELGHPAIGPIQVHQEALKMEWQNFLNLCICQESQLQRVEDYRRFQEEADSVSQTLAKLSSNLDTKYGFGTGDSSGSPTELLLQLEAEEKQLAIAERAVGDLQQRSQEVAPLPQRRNPSKQPLHVDSICDWDSGEVQLLRGERYTLKDNADPYTWLVQGPGGETKSAPAACLCIPAPDPEAVAKASRLATELQTLKQKLSTEKNRLKAAAVEHLQPGQQAPAGSAPADPQGQTLLSQMTQLDGDLGQIERQVLSWARSPLSQSSSLKDLEGRIHSCEGTAQRLQSLGAEKEAAQQECEAFLSTKPTGSAALQLPVVLNSVKNRYNDVQSLCHLYGEKAKAALGLEKQIQEADRVIQGFEAALALEGPVPEGSGALQERVSELQRQRKELLQQQACVLGLHRQLKATEHACSALQNNFQEFCQDLPRQQRQVRALTDRYHAVGDQLDLREKIVQDASLTYQQLRNSRDNLSSWLEQLPHHRVQPSDGPSQISYKLQAQKRLIQEILGREQDQATVSRLTRDLQEALQDYELQADTYRCSLEPALAVSAPKRLRVISLQESIQAQEKNLAKAYTEVAAAEQQQLRQLEFAKKMLRKKELDEDIQAIHSARQGSGSPAHARTAESEVLKTQLEEERKRVAEVQRDLEEQRQRLLQLRTQQPVARLEEKEVVEFYRDPQLESNLSQAASRVEEEGKRRARLQAELEAVAQKVVHLEGKRKTMQPHLLTKEVTQIERDPGLDSQVTQLHSEMQRLRGENGVLTARLEELKDELLALEQKEMNVKEKVVVKEVVKVEKDLEMVKAAQTLRLQIEEDAARRKGAKETVAKIQARIKDLEQAISSVEPKVIVKEVKKVEQDPGLLKEASRLRSLLEEEKNNNVALARELQELQEKYRVVEKQKPKVQLQERVSEIFQVLPETEQEIRRLRAQLQETGSKKSGVEQEVEKLLPELEVLRAQKPVVEYKEVTQEVVRHEKNPEVLREIDRLKAQLNELVNTNGRSQEQLIRLQGERDEWKRERSKVETKMVSKEVVRHEKDPVLEKEAERLRQEVREAVQRRRATEDAVYELQNKLLLLERRRPEEQIVVQEVVVTQKDPKLREEHSRLSRSLDEEVGRRRQLELEVRQLGARVEEEEARLSFEEDRSKKLAAERELRQLTLKIQELEKRPPALQEKIIMEEVVKLEKDPDLERSTEALRRELDQEKNRVTELHRECQGLQVQVDLLQKTKSQEKTIYKEVIRVEKDPVLEGERARVWEILNRERAARKGREEDVRSLQERIDRAEALRRSWSREEAELQRARDQASQDCGRLQRQLRELEQQKQQKARQLQEEGRLLSQKTESERQKAAQRSQAVTQLEAAILQEKDKIYEKERTLRDLHTKVSREELNQETQTRETNLSTKICILEPETGNDMSPYEAYKRGVIDRGQYLQLQELECDWEEVTTSSPCGEESVLLDRKSGKQYSIEAALRCRRISKEEYHRYKDGRLPISEFALLVAGETKPSSSLSIGSIISKSPVCSPGPQSTGFFSPGLSFGLTEDSFPIAGIYDTTTDNKCSIKAAVAKNMLDPITGQKLLEAQAATGGIVDLLSRERYSVHKAVERGLIENTSTQRLLNAQKAFTGIEDPVTRKRLSVGEAIQKGWMPQESVLPHLLVQHLTGGLIDPKRTGRIPVPQAVLCGMISEDLGQLLQDESGYEKDLTDPITKERLSYKEAMGRCRKDPLSGLLLLPAMLEGYRCYRAASPTLPRSCVR.

The span at methionine 1–serine 27 shows a compositional bias: low complexity. Disordered stretches follow at residues methionine 1–glutamine 37 and lysine 63–glycine 84. Positions methionine 1–proline 841 are globular 1. Residues lysine 12 to proline 28 form a 4 X 4 AA tandem repeats of K-G-S-P region. A compositionally biased stretch (polar residues) spans glycine 71–glycine 84. One copy of the Spectrin repeat lies at tyrosine 229–glutamine 330. The interval glutamine 400–aspartate 419 is disordered. Positions lysine 413–proline 470 constitute an SH3 domain. Residues lysine 842–histidine 1664 are a coiled coil. The tract at residues lysine 842–glutamine 1674 is central fibrous rod domain. A Plectin 1 repeat occupies lysine 1186–glycine 1227. The residue at position 1576 (serine 1576) is a Phosphoserine. The span at lysine 1607–lysine 1631 shows a compositional bias: basic and acidic residues. The disordered stretch occupies residues lysine 1607–glutamine 1637. The globular 2 stretch occupies residues glutamate 1675–arginine 2035. The Plectin 2 repeat unit spans residues arginine 1679 to tyrosine 1714. Position 1800 is a phosphoserine (serine 1800). 5 Plectin repeats span residues phenylalanine 1819–glycine 1856, glutamine 1857–threonine 1894, glutamine 1895–valine 1932, leucine 1933–glycine 1970, and glutamine 1971–glycine 2008. A Phosphoserine modification is found at serine 2026.

The protein belongs to the plakin or cytolinker family. As to quaternary structure, may form a homodimer or a heterodimer with PPL.

It is found in the cell junction. It localises to the desmosome. Its subcellular location is the cornified envelope. The protein resides in the cytoplasm. The protein localises to the cytoskeleton. Its function is as follows. Component of the cornified envelope of keratinocytes. May link the cornified envelope to desmosomes and intermediate filaments. This is Envoplakin (Evpl) from Mus musculus (Mouse).